We begin with the raw amino-acid sequence, 708 residues long: Metal-pseudopaline receptor CntO (708 aa).

Positions 1 to 21 are cleaved as a signal peptide; that stretch reads MRVSVSLVLGVGLGCSSPALW. The TBDR plug domain occupies 63-169; the sequence is RIEDIPQAIS…PGGTVNLVTK (107 aa). A TBDR beta-barrel domain is found at 174–708; sequence ERFARLHASA…NLTMSLTLNY (535 aa).

Belongs to the TonB-dependent receptor family.

Its subcellular location is the cell outer membrane. Functionally, transports the metallophore pseudopaline, which is involved in the acquisition of nickel and zinc, and thus enables bacterial growth inside the host, where metal access is limited. Is probably involved in the import of pseudopaline-metal complexes. The sequence is that of Metal-pseudopaline receptor CntO from Pseudomonas aeruginosa (strain ATCC 15692 / DSM 22644 / CIP 104116 / JCM 14847 / LMG 12228 / 1C / PRS 101 / PAO1).